Here is a 261-residue protein sequence, read N- to C-terminus: Syntaxin-7 (261 aa).

At Ser-2 the chain carries N-acetylserine. The Cytoplasmic portion of the chain corresponds to 2 to 238; the sequence is SYTPGIGGDP…NYQRKSRKTL (237 aa). A Phosphothreonine modification is found at Thr-4. Positions 47–68 form a coiled coil; the sequence is ELRQQLQQEQQYTNQLAKETDK. A Phosphothreonine modification is found at Thr-79. Phosphoserine occurs at positions 125, 126, 129, and 205. A disordered region spans residues 128-148; the sequence is VSGGFPEDSSKEKNFVSWESQ. A t-SNARE coiled-coil homology domain is found at 165-227; the sequence is LRLIHERESS…QQANQQLSRA (63 aa). The helical; Anchor for type IV membrane protein transmembrane segment at 239 to 259 threads the bilayer; sequence CIIILILVVGIVIIFFIVWGL. Residues 260–261 are Vesicular-facing; the sequence is KG.

This sequence belongs to the syntaxin family. In terms of assembly, interacts with VPS11, VPS16 and VPS18. Interacts with VPS33A. Forms a SNARE complex with VTI1B, STX8 and VAMP8 which functions in the homotypic fusion of late endosomes. Component of the SNARE complex composed of STX7, STX8, VAMP7 and VTI1B that is required for heterotypic fusion of late endosomes with lysosomes. Interacts with TPC1. As to expression, detected in all tissues tested. Highest expression is found in kidney followed by lung, spleen, heart and brain. Lower expression, in skeletal muscle, liver and testis.

It localises to the early endosome membrane. Its function is as follows. May be involved in protein trafficking from the plasma membrane to the early endosome (EE) as well as in homotypic fusion of endocytic organelles. Mediates the endocytic trafficking from early endosomes to late endosomes and lysosomes. The chain is Syntaxin-7 (Stx7) from Rattus norvegicus (Rat).